Consider the following 118-residue polypeptide: NADH-ubiquinone oxidoreductase chain 3 (118 aa).

A run of 3 helical transmembrane segments spans residues 6-26 (IFVY…VSFL), 62-82 (LVSI…PWAV), and 87-107 (IGLF…IGFV).

It belongs to the complex I subunit 3 family.

Its subcellular location is the mitochondrion membrane. The catalysed reaction is a ubiquinone + NADH + 5 H(+)(in) = a ubiquinol + NAD(+) + 4 H(+)(out). Functionally, core subunit of the mitochondrial membrane respiratory chain NADH dehydrogenase (Complex I) that is believed to belong to the minimal assembly required for catalysis. Complex I functions in the transfer of electrons from NADH to the respiratory chain. The immediate electron acceptor for the enzyme is believed to be ubiquinone. This Marchantia polymorpha (Common liverwort) protein is NADH-ubiquinone oxidoreductase chain 3 (ND3).